A 521-amino-acid chain; its full sequence is Lipid-translocating exporter-like protein RTA1 (521 aa).

The next 7 membrane-spanning stretches (helical) occupy residues 186 to 206 (GAPIFFTIAFAISTILHSWQC), 211 to 231 (AWKLIWLQPACAALFTLGYAL), 249 to 269 (LALFILSQICIYLGPPLLELA), 292 to 312 (VTAFFGGLMAIVEGLSGSGVS), 332 to 352 (LVALALQVCVIFIFVYLSVLF), 371 to 391 (TLMTLYLSMALIFIRCVFRLV), and 418 to 438 (EAYFYAFEASLMLINSFLWNV). The tract at residues 493-521 (THSQPQELYENPNGNGHKKFRLGNGGRAT) is disordered.

It belongs to the lipid-translocating exporter (LTE) (TC 9.A.26.1) family.

It is found in the membrane. In terms of biological role, lipid-translocating exporter-like protein; part of the gene cluster that mediates the biosynthesis of phomenoic acid, a long chain aliphatic carboxylic acid that does not appear to be essential for pathogenicity but may play a role in allowing to outcompete other fungi in the environmental niche via its antifungal properties. The polypeptide is Lipid-translocating exporter-like protein RTA1 (Leptosphaeria maculans (strain JN3 / isolate v23.1.3 / race Av1-4-5-6-7-8) (Blackleg fungus)).